The primary structure comprises 363 residues: Inositol-3-phosphate synthase (363 aa).

Residues Asp68, Ala127, Tyr147, Ser190, Asp225, and Lys238 each coordinate NAD(+).

Belongs to the myo-inositol 1-phosphate synthase family. In terms of assembly, monomer. Requires NAD(+) as cofactor.

It catalyses the reaction D-glucose 6-phosphate = 1D-myo-inositol 3-phosphate. Its pathway is polyol metabolism; myo-inositol biosynthesis; myo-inositol from D-glucose 6-phosphate: step 1/2. Key enzyme in myo-inositol biosynthesis pathway that catalyzes the conversion of glucose 6-phosphate to 1D-myo-inositol 3-phosphate in a NAD-dependent manner. Plays a key role in oxidative stress resistance as its product is the precursor of the protective antioxidant mycothiol (MSH or AcCys-GlcN-Ins). In Corynebacterium glutamicum (strain ATCC 13032 / DSM 20300 / JCM 1318 / BCRC 11384 / CCUG 27702 / LMG 3730 / NBRC 12168 / NCIMB 10025 / NRRL B-2784 / 534), this protein is Inositol-3-phosphate synthase.